We begin with the raw amino-acid sequence, 226 residues long: Small ribosomal subunit protein uS3 (226 aa).

The KH type-2 domain occupies 39-107; it reads VRKFLNKELR…PAQINISEVR (69 aa).

This sequence belongs to the universal ribosomal protein uS3 family. Part of the 30S ribosomal subunit. Forms a tight complex with proteins S10 and S14.

Functionally, binds the lower part of the 30S subunit head. Binds mRNA in the 70S ribosome, positioning it for translation. This Idiomarina loihiensis (strain ATCC BAA-735 / DSM 15497 / L2-TR) protein is Small ribosomal subunit protein uS3.